The following is a 114-amino-acid chain: Flagellar transcriptional regulator FlhD (114 aa).

This sequence belongs to the FlhD family. As to quaternary structure, homodimer; disulfide-linked. Forms a heterohexamer composed of two FlhC and four FlhD subunits. Each FlhC binds a FlhD dimer, forming a heterotrimer, and a hexamer assembles by dimerization of two heterotrimers.

The protein localises to the cytoplasm. In terms of biological role, functions in complex with FlhC as a master transcriptional regulator that regulates transcription of several flagellar and non-flagellar operons by binding to their promoter region. Activates expression of class 2 flagellar genes, including fliA, which is a flagellum-specific sigma factor that turns on the class 3 genes. Also regulates genes whose products function in a variety of physiological pathways. The polypeptide is Flagellar transcriptional regulator FlhD (Wigglesworthia glossinidia brevipalpis).